The sequence spans 2871 residues: Fibrillin-1 (2871 aa).

The first 24 residues, 1–24, serve as a signal peptide directing secretion; it reads MRRGRLLEVALGFTVLLASYTSHR. A propeptide spanning residues 25 to 44 is cleaved from the precursor; the sequence is AEANLEAGNGKETRASRAKR. Residues 29–39 are compositionally biased toward basic and acidic residues; that stretch reads LEAGNGKETRA. A disordered region spans residues 29–49; the sequence is LEAGNGKETRASRAKRRGGGG. Residues 45-81 are fibrillin unique N-terminal (FUN) domain; sequence RGGGGHDALKGPNVCGSRYNAYCCPGWKTLPGGNQCI. The tract at residues 45 to 450 is N-terminal domain; it reads RGGGGHDALK…PPRVLPVNVT (406 aa). Intrachain disulfides connect cysteine 59–cysteine 68, cysteine 67–cysteine 80, cysteine 85–cysteine 94, cysteine 89–cysteine 100, cysteine 102–cysteine 111, cysteine 119–cysteine 129, cysteine 123–cysteine 134, cysteine 136–cysteine 145, cysteine 150–cysteine 160, cysteine 154–cysteine 166, and cysteine 168–cysteine 177. EGF-like domains lie at 81 to 112, 115 to 146, and 147 to 178; these read IVPICRHSCGDGFCSRPNMCTCPSGQIAPSCG, SIQHCNIRCMNGGSCSDDHCLCQKGYIGTHCG, and QPVCESGCLNGGRCVAPNRCACTYGFTGPQCE. The tract at residues 119 to 329 is interaction with MFAP4; the sequence is CNIRCMNGGS…YTSPDGTRCI (211 aa). The region spanning 184-236 is the TB 1 domain; the sequence is GPCFTVVSNQMCQGQLSGIVCTKTLCCATVGRAWGHPCEMCPAQPHPCRRGFI. Residues 195–221 form a hybrid domain 1 region; it reads CQGQLSGIVCTKTLCCATVGRAWGHPC. The 42-residue stretch at 246 to 287 folds into the EGF-like 4; calcium-binding domain; the sequence is DVDECQAIPGLCQGGNCINTVGSFECKCPAGHKFNEVSQKCE. 6 disulfide bridges follow: cysteine 250-cysteine 262, cysteine 257-cysteine 271, cysteine 273-cysteine 286, cysteine 292-cysteine 304, cysteine 299-cysteine 313, and cysteine 315-cysteine 328. Serine 268 carries O-linked (Glc) serine glycosylation. The 42-residue stretch at 288-329 folds into the EGF-like 5; calcium-binding domain; that stretch reads DIDECSTIPGICDGGECTNTVSSYFCKCPPGFYTSPDGTRCI. In terms of domain architecture, TB 2 spans 334 to 389; that stretch reads GYCYTALTNGRCSNQLPQSITKMQCCCDVGRCWSPGVTVTPEMCPIRATEDFNKLC. Asparagine 448 is a glycosylation site (N-linked (GlcNAc...) asparagine). The EGF-like 6 domain occupies 449-489; that stretch reads VTDYCQLFRYLCHNGRCIPTPGSYRCECNKGFQLDLRGECI. Cystine bridges form between cysteine 453-cysteine 465, cysteine 460-cysteine 474, cysteine 476-cysteine 488, cysteine 494-cysteine 504, cysteine 499-cysteine 513, cysteine 515-cysteine 528, cysteine 534-cysteine 546, cysteine 541-cysteine 555, cysteine 557-cysteine 570, cysteine 576-cysteine 587, cysteine 582-cysteine 596, cysteine 598-cysteine 611, cysteine 617-cysteine 628, cysteine 623-cysteine 637, and cysteine 639-cysteine 652. The O-linked (Glc) serine glycan is linked to serine 471. Residues 490 to 529 enclose the EGF-like 7; calcium-binding domain; the sequence is DVDECEKNPCAGGECINNQGSYTCQCRPGYQSTLTRTECR. An O-linked (Glc) serine glycan is attached at serine 510. Positions 530 to 571 constitute an EGF-like 8; calcium-binding domain; that stretch reads DIDECLQNGRICNNGRCINTDGSFHCVCNAGFHVTRDGKNCE. The region spanning 572-612 is the EGF-like 9; calcium-binding domain; it reads DMDECSIRNMCLNGMCINEDGSFKCICKPGFQLASDGRYCK. The 41-residue stretch at 613–653 folds into the EGF-like 10; calcium-binding domain; it reads DINECETSGICMNGRCVNTDGSYRCECFPGLAVGLDGRVCV. The TB 3 domain maps to 659-711; it reads STCYGGYKRGQCVKPLFGAVTKSECCCASTEYAFGEPCQPCPSQNSAEYQALC. The EGF-like 11; calcium-binding domain occupies 723-764; sequence DINECALDPDICPNGICENLRGTYKCICNSGYEVDSTGKNCV. 16 disulfide bridges follow: cysteine 727–cysteine 739, cysteine 734–cysteine 748, cysteine 750–cysteine 763, cysteine 769–cysteine 781, cysteine 776–cysteine 790, cysteine 792–cysteine 805, cysteine 811–cysteine 821, cysteine 816–cysteine 830, cysteine 832–cysteine 845, cysteine 853–cysteine 875, cysteine 862–cysteine 887, cysteine 876–cysteine 890, cysteine 896–cysteine 908, cysteine 914–cysteine 926, cysteine 921–cysteine 935, and cysteine 937–cysteine 950. An EGF-like 12; calcium-binding domain is found at 765–806; it reads DINECVLNSLLCDNGQCRNTPGSFVCTCPKGFIYKPDLKTCE. The region spanning 807-846 is the EGF-like 13; calcium-binding domain; that stretch reads DIDECESSPCINGVCKNSPGSFICECSSESTLDPTKTICI. The 52-residue stretch at 851 to 902 folds into the TB 4 domain; that stretch reads GTCWQTIIDGRCEININGATLKSQCCSSLGAAWGSPCTPCQVDPICGKGYSR. Positions 862-887 are hybrid domain 2; that stretch reads CEININGATLKSQCCSSLGAAWGSPC. The EGF-like 14; calcium-binding domain maps to 910–951; sequence DIDECEVFPGVCKNGLCVNSKGSFKCQCPNGMTLDATGRICL. A TB 5 domain is found at 956–1008; the sequence is ETCFLRYEDEECTLPVVGRHRMDACCCSVGAAWGTEECEECPPRNTPEYEELC. The EGF-like 15; calcium-binding domain occupies 1028–1069; that stretch reads DINECKMIPNLCTHGKCRNTIGSFKCRCDSGFALDSEERNCI. 43 cysteine pairs are disulfide-bonded: cysteine 1032–cysteine 1044, cysteine 1039–cysteine 1053, cysteine 1055–cysteine 1068, cysteine 1074–cysteine 1086, cysteine 1081–cysteine 1095, cysteine 1097–cysteine 1111, cysteine 1117–cysteine 1129, cysteine 1124–cysteine 1138, cysteine 1140–cysteine 1153, cysteine 1159–cysteine 1171, cysteine 1201–cysteine 1212, cysteine 1208–cysteine 1221, cysteine 1223–cysteine 1236, cysteine 1242–cysteine 1254, cysteine 1249–cysteine 1263, cysteine 1265–cysteine 1278, cysteine 1284–cysteine 1296, cysteine 1291–cysteine 1305, cysteine 1307–cysteine 1320, cysteine 1326–cysteine 1339, cysteine 1333–cysteine 1348, cysteine 1350–cysteine 1361, cysteine 1367–cysteine 1380, cysteine 1374–cysteine 1389, cysteine 1391–cysteine 1402, cysteine 1408–cysteine 1420, cysteine 1415–cysteine 1429, cysteine 1450–cysteine 1461, cysteine 1456–cysteine 1470, cysteine 1472–cysteine 1485, cysteine 1491–cysteine 1502, cysteine 1497–cysteine 1511, cysteine 1513–cysteine 1526, cysteine 1534–cysteine 1562, cysteine 1549–cysteine 1574, cysteine 1563–cysteine 1577, cysteine 1564–cysteine 1589, cysteine 1610–cysteine 1622, cysteine 1617–cysteine 1631, cysteine 1633–cysteine 1646, cysteine 1652–cysteine 1663, cysteine 1658–cysteine 1672, and cysteine 1674–cysteine 1687. In terms of domain architecture, EGF-like 16; calcium-binding spans 1070–1112; the sequence is DIDECRISPDLCGRGQCVNTPGDFECKCDEGYESGFMMMKNCM. Positions 1113-1154 constitute an EGF-like 17; calcium-binding domain; it reads DIDECQRDPLLCRGGVCLNTEGSYRCECPSGHQMSPNISACI. O-linked (Glc) serine glycosylation is present at serine 1135. Asparagine 1149 carries N-linked (GlcNAc...) asparagine glycosylation. Residues 1155–1196 form the EGF-like 18; calcium-binding domain; the sequence is DINECELSAHLCPHGRCVNLIGKYQRARNPGYHSTPDRLFCV. Positions 1197–1237 constitute an EGF-like 19; calcium-binding domain; the sequence is DIDECSIMNGGCETFCTNSEGSYECSCQPGFALMPDQRSCT. Serine 1218 carries an O-linked (Glc) serine glycan. An EGF-like 20; calcium-binding domain is found at 1238 to 1279; sequence DIDECEDNPNICDGGQCTNIPGEYRCLCYDGFMASEDMKTCV. The EGF-like 21; calcium-binding domain maps to 1280–1321; the sequence is DVNECDLNPNICLSGTCENTKGSFICHCDMGYSGKKGKTGCT. Residue serine 1302 is glycosylated (O-linked (Glc) serine). The EGF-like 22; calcium-binding domain occupies 1322–1362; that stretch reads DINECEIGAHNCDRHAVCTNTAGSFNCSCSPGWIGDGIKCT. An O-linked (Glc) serine glycan is attached at serine 1345. Asparagine 1347 is a glycosylation site (N-linked (GlcNAc...) asparagine). An EGF-like 23; calcium-binding domain is found at 1363–1403; that stretch reads DLDECSNGTHMCSQHADCKNTMGSYRCLCKEGYTGDGFTCA. N-linked (GlcNAc...) asparagine glycosylation is present at asparagine 1369. An O-linked (Glc) serine glycan is attached at serine 1386. The EGF-like 24; calcium-binding domain maps to 1404-1445; the sequence is DLDECSENVKLCGNVQCLYAPGGYHCEYDMGFVPSADRKSCV. The EGF-like 25; calcium-binding domain maps to 1446–1486; sequence DSDECSLPNICVFGTCHNLPGLFRCECEIGYELDRSGGNCT. N-linked (GlcNAc...) asparagine glycosylation occurs at asparagine 1484. Positions 1487 to 1527 constitute an EGF-like 26; calcium-binding domain; the sequence is DVNECLEPPTCISGNCVNTPGSYTCVCPPDFELNPTRVGCV. Residue serine 1508 is glycosylated (O-linked (Glc) serine). Residues 1528 to 2731 are C-terminal domain; sequence DTRSGNCYLD…GYPKRGRKRR (1204 aa). One can recognise a TB 6 domain in the interval 1532–1589; the sequence is GNCYLDVRPRGDNGDTACSNEIGVGVSKASCCCSLGKAWGTPCEQCPPVNTSEYKILC. A Cell attachment site motif is present at residues 1541–1543; sequence RGD. N-linked (GlcNAc...) asparagine glycosylation occurs at asparagine 1581. The region spanning 1606–1647 is the EGF-like 27; calcium-binding domain; that stretch reads DIDECQELPGLCQGGKCINTFGSFQCRCPTGYYLNEDTRVCD. An O-linked (Glc) serine glycan is attached at serine 1628. One can recognise an EGF-like 28; calcium-binding domain in the interval 1648 to 1688; the sequence is DVNECETPGICGPGTCYNTVGNYTCICPPDYMQVNGGNNCM. N-linked (GlcNAc...) asparagine glycosylation occurs at asparagine 1669. Positions 1693 to 1748 constitute a TB 7 domain; that stretch reads SLCYRNYYADNQTCDGELLFNMTKKMCCCSYNIGRAWNKPCEQCPIPSTDEFATLC. Asparagine 1703 and asparagine 1713 each carry an N-linked (GlcNAc...) asparagine glycan. The region spanning 1766–1807 is the EGF-like 29; calcium-binding domain; the sequence is DIDECREIPGVCENGVCINMVGSFRCECPVGFFYNDKLLVCE. 40 disulfides stabilise this stretch: cysteine 1770-cysteine 1782, cysteine 1777-cysteine 1791, cysteine 1793-cysteine 1806, cysteine 1812-cysteine 1824, cysteine 1818-cysteine 1833, cysteine 1835-cysteine 1847, cysteine 1853-cysteine 1865, cysteine 1860-cysteine 1874, cysteine 1876-cysteine 1889, cysteine 1895-cysteine 1905, cysteine 1900-cysteine 1914, cysteine 1916-cysteine 1928, cysteine 1934-cysteine 1947, cysteine 1942-cysteine 1956, cysteine 1958-cysteine 1971, cysteine 1977-cysteine 1989, cysteine 1984-cysteine 1998, cysteine 2000-cysteine 2011, cysteine 2017-cysteine 2029, cysteine 2024-cysteine 2038, cysteine 2040-cysteine 2053, cysteine 2061-cysteine 2083, cysteine 2070-cysteine 2096, cysteine 2084-cysteine 2099, cysteine 2085-cysteine 2111, cysteine 2131-cysteine 2142, cysteine 2137-cysteine 2151, cysteine 2153-cysteine 2164, cysteine 2170-cysteine 2181, cysteine 2176-cysteine 2190, cysteine 2192-cysteine 2204, cysteine 2210-cysteine 2221, cysteine 2217-cysteine 2230, cysteine 2232-cysteine 2245, cysteine 2251-cysteine 2265, cysteine 2258-cysteine 2274, cysteine 2276-cysteine 2289, cysteine 2295-cysteine 2307, cysteine 2302-cysteine 2316, and cysteine 2318-cysteine 2331. Residues 1808–1848 enclose the EGF-like 30; calcium-binding domain; that stretch reads DIDECQNGPVCQRNAECINTAGSYRCDCKPGYRFTSTGQCN. O-linked (Glc) serine glycosylation occurs at serine 1830. In terms of domain architecture, EGF-like 31; calcium-binding spans 1849 to 1890; the sequence is DRNECQEIPNICSHGQCIDTVGSFYCLCHTGFKTNADQTMCL. Serine 1871 carries an O-linked (Glc) serine glycan. In terms of domain architecture, EGF-like 32; calcium-binding spans 1891–1929; it reads DINECERDACGNGTCRNTIGSFNCRCNHGFILSHNNDCI. N-linked (GlcNAc...) asparagine glycosylation occurs at asparagine 1902. Residue serine 1911 is glycosylated (O-linked (Glc) serine). An EGF-like 33; calcium-binding domain is found at 1930–1972; it reads DVDECATGNGNLCRNGQCINTVGSFQCQCNEGYEVAPDGRTCV. The O-linked (Glc) serine glycan is linked to serine 1953. One can recognise an EGF-like 34; calcium-binding domain in the interval 1973–2012; the sequence is DINECLLEPGKCAPGTCQNLDGSYRCICPPGYSLQNDKCE. Residues 2013–2054 form the EGF-like 35; calcium-binding domain; it reads DIDECVEEPEICALGTCSNTEGSFKCLCPDGFSLSSTGRRCQ. Residue serine 2035 is glycosylated (O-linked (Glc) serine). The 53-residue stretch at 2059–2111 folds into the TB 8 domain; it reads SYCYAKFEGGKCSSPKSRNHSKQECCCALKGEGWGDPCELCPTEPDEAFRQIC. N-linked (GlcNAc...) asparagine glycosylation occurs at asparagine 2077. Positions 2127–2165 constitute an EGF-like 36; calcium-binding domain; it reads DMDECKEPDVCKHGQCINTDGSYRCECPFGYILEGNECV. A glycan (O-linked (Glc) serine) is linked at serine 2148. Residues 2166–2205 enclose the EGF-like 37; calcium-binding domain; the sequence is DTDECSVGNPCGNGTCKNVIGGFECTCEEGFEPGPMMTCE. A glycan (N-linked (GlcNAc...) asparagine) is linked at asparagine 2178. The EGF-like 38; calcium-binding domain maps to 2206–2246; sequence DINECAQNPLLCAFRCVNTYGSYECKCPTGYVLREDRRMCK. A glycan (O-linked (Glc) serine) is linked at serine 2227. The EGF-like 39; calcium-binding domain maps to 2247–2290; it reads DEDECEEGKHDCAEKQMECKNLIGMYICICGPGYQRRPDGEGCV. Residues 2291 to 2332 enclose the EGF-like 40; calcium-binding domain; sequence DENECQTKPGICENGRCLNTRGSYTCECNDGFTASPTQDECL. O-linked (Glc) serine glycosylation occurs at serine 2313. The TB 9 domain occupies 2337–2390; that stretch reads GYCFTEVLQNMCQIGSSNRNPVTKSECCCDGGRGWGPHCEICPFQGTVAFKKLC. The EGF-like 41; calcium-binding domain occupies 2402-2443; the sequence is DIDECKVIHDVCRNGECINDRGSYHCICKTGYTPDITGTACV. Disulfide bonds link cysteine 2406–cysteine 2418, cysteine 2413–cysteine 2427, cysteine 2429–cysteine 2442, cysteine 2448–cysteine 2459, cysteine 2455–cysteine 2468, cysteine 2470–cysteine 2483, cysteine 2489–cysteine 2500, cysteine 2496–cysteine 2509, cysteine 2511–cysteine 2522, cysteine 2528–cysteine 2541, cysteine 2535–cysteine 2550, cysteine 2552–cysteine 2565, cysteine 2571–cysteine 2581, cysteine 2577–cysteine 2590, cysteine 2592–cysteine 2605, cysteine 2611–cysteine 2622, cysteine 2617–cysteine 2631, cysteine 2633–cysteine 2646, cysteine 2652–cysteine 2663, cysteine 2659–cysteine 2672, and cysteine 2674–cysteine 2686. One can recognise an EGF-like 42; calcium-binding domain in the interval 2444–2484; sequence DLNECNQAPKPCNFICKNTEGSYQCSCPKGYILQEDGRSCK. Serine 2465 is a glycosylation site (O-linked (Glc) serine). Residues 2485–2523 form the EGF-like 43; calcium-binding domain; sequence DLDECATKQHNCQFLCVNTIGSFACKCPPGFTQHHTACI. The region spanning 2524-2566 is the EGF-like 44; calcium-binding domain; that stretch reads DNNECTSDINLCGAKGICQNTPGSFTCECQRGFSLDQSGASCE. A glycan (O-linked (Glc) serine) is linked at serine 2547. The 40-residue stretch at 2567-2606 folds into the EGF-like 45; calcium-binding domain; that stretch reads DVDECEGNHRCQHGCQNIIGGYRCSCPQGYLQHYQWNQCV. Residues 2607-2647 form the EGF-like 46; calcium-binding domain; the sequence is DENECLSAHICGGASCHNTLGSYKCMCPAGFQYEQFSGGCQ. Serine 2628 is a glycosylation site (O-linked (Glc) serine). One can recognise an EGF-like 47; calcium-binding domain in the interval 2648-2687; it reads DINECGSSQAPCSYGCSNTEGGYLCGCPPGYFRIGQGHCV. Serine 2702 and serine 2709 each carry phosphoserine. Residues asparagine 2734, asparagine 2750, and asparagine 2767 are each glycosylated (N-linked (GlcNAc...) asparagine).

It belongs to the fibrillin family. In terms of assembly, interacts with COL16A1. Interacts with integrin alpha-V/beta-3. Interacts with ADAMTS10; this interaction promotes microfibril assembly. Interacts with THSD4; this interaction promotes fibril formation. Interacts (via N-terminal domain) with FBLN2 and FBLN5. Interacts with ELN. Forms a ternary complex with ELN and FBLN2 or FBLN5 and a significant interaction with ELN seen only in the presence of FBLN2 or FBLN5. Interacts (via N-terminal domain) with LTBP2 (via C-terminal domain) in a Ca(+2)-dependent manner. Interacts (via N-terminal domain) with LTBP1 (via C-terminal domain). Interacts with integrins ITGA5:ITGB1, ITGAV:ITGB3 and ITGAV:ITGB6. Interacts (via N-terminal domain) with BMP2, BMP4, BMP7, BMP10 and GDF5. Interacts (via N-terminal domain) with MFAP2 and MFAP5. Interacts with ADAMTSL5. Interacts with MFAP4. Interacts (via N-terminal domain) with TNFSF11 in a Ca(+2)-dependent manner. Interacts (via N-terminal domain) with EFEMP2; this interaction inhibits EFEMP2 binding to LOX and ELN. Cleavage of N- and C-terminus by furin is required for incorporation into the extracellular matrix and assembly into microfibrils. The C-terminus, which corresponds to the Asprosin chain, was initially thought to constitute a propeptide. Fibrillin-1 and Asprosin chains are still linked together during the secretion from cells, but are subsequently separated by furin, an essential step for incorporation of Fibrillin-1 into the nascent microfibrils. Post-translationally, forms intermolecular disulfide bonds either with other fibrillin-1 molecules or with other components of the microfibrils. In terms of processing, O-glycosylated on serine residues by POGLUT2 and POGLUT3 which is necessary for efficient protein secretion.

The protein resides in the secreted. Its subcellular location is the extracellular space. It localises to the extracellular matrix. In terms of biological role, structural component of the 10-12 nm diameter microfibrils of the extracellular matrix, which conveys both structural and regulatory properties to load-bearing connective tissues. Fibrillin-1-containing microfibrils provide long-term force bearing structural support. In tissues such as the lung, blood vessels and skin, microfibrils form the periphery of the elastic fiber, acting as a scaffold for the deposition of elastin. In addition, microfibrils can occur as elastin-independent networks in tissues such as the ciliary zonule, tendon, cornea and glomerulus where they provide tensile strength and have anchoring roles. Fibrillin-1 also plays a key role in tissue homeostasis through specific interactions with growth factors, such as the bone morphogenetic proteins (BMPs), growth and differentiation factors (GDFs) and latent transforming growth factor-beta-binding proteins (LTBPs), cell-surface integrins and other extracellular matrix protein and proteoglycan components. Regulates osteoblast maturation by controlling TGF-beta bioavailability and calibrating TGF-beta and BMP levels, respectively. Negatively regulates osteoclastogenesis by binding and sequestering an osteoclast differentiation and activation factor TNFSF11. This leads to disruption of TNFSF11-induced Ca(2+) signaling and impairment of TNFSF11-mediated nuclear translocation and activation of transcription factor NFATC1 which regulates genes important for osteoclast differentiation and function. Mediates cell adhesion via its binding to cell surface receptors integrins ITGAV:ITGB3 and ITGA5:ITGB1. Binds heparin and this interaction plays an important role in the assembly of microfibrils. Its function is as follows. Hormone that targets the liver to increase plasma glucose levels. Secreted by white adipose tissue and circulates in the plasma. Acts in response to fasting and promotes blood glucose elevation by binding to the surface of hepatocytes. Promotes hepatocyte glucose release by activating the protein kinase A activity in the liver, resulting in rapid glucose release into the circulation. This is Fibrillin-1 from Sus scrofa (Pig).